A 334-amino-acid polypeptide reads, in one-letter code: MKPKVLITRKIPENGIKMLREHFEVEVWEDEHEISREVLLEKVRDVDALVTMLSERIDAEVFDAAPRLKIVANYAVGYDNIDIEEATKMGVYITNTPDVLTNATADMAWVLLLATARRLIEADKFVRSGEWKKRGVAWHPLMFLGYDVYGRTIGIVGFGRIGQAIARRAKGFGMRILYNSRTRKPEVEKELGAEFMPLDELLKESDFVVLVVPLTKETYHMINEERLKLMKPTAILVNIARGKVVDTEALVKALREGWIAGAGLDVFEEEPYYHEELFSLDNVVLAPHIGSATYGAREGMAELVARNLIAFKNGEVPPTLVNREVLNVRKPGFE.

NADP(+)-binding positions include 158 to 161 (FGRI), 180 to 182 (SRT), and 239 to 241 (IAR). Residues R241 and E270 contribute to the active site. Catalysis depends on H288, which acts as the Proton donor. 288–290 (HIG) contributes to the NADP(+) binding site.

The protein belongs to the D-isomer specific 2-hydroxyacid dehydrogenase family. GyaR subfamily. As to quaternary structure, homodimer.

Its subcellular location is the cytoplasm. It catalyses the reaction glycolate + NAD(+) = glyoxylate + NADH + H(+). The sequence is that of Glyoxylate reductase from Thermococcus onnurineus (strain NA1).